The following is a 619-amino-acid chain: MKGGGGGGGGGGGGKRRWKVLVIGVLVLVILSMLVPLAFLLGLHNGFHSPGFVTVQPASSFESFTRINATKHTQRDVSERVDEVLQKINPVLPKKSDINVGSRDVNATSGTDSKKRGLPVSPTVVANPSPANKTKSEASYTGVQRKIVSGDETWRTCEVKYGSYCLWREENKEPMKDAKVKQMKDQLFVARAYYPSIAKMPSQSKLTRDMKQNIQEFERILSESSQDADLPPQVDKKLQKMEAVIAKAKSFPVDCNNVDKKLRQILDLTEDEASFHMKQSVFLYQLAVQTMPKSLHCLSMRLTVEHFKSDSLEDPISEKFSDPSLLHFVIISDNILASSVVINSTVVHARDSKNFVFHVLTDEQNYFAMKQWFIRNPCKQSTVQVLNIEKLELDDSDMKLSLSAEFRVSFPSGDLLASQQNRTHYLSLFSQSHYLLPKLFDKLEKVVILDDDVVVQRDLSPLWDLDMEGKVNGAVKSCTVRLGQLRSLKRGNFDTNACLWMSGLNVVDLARWRALGVSETYQKYYKEMSSGDESSEAIALQASLLTFQDQVYALDDKWALSGLGYDYYINAQAIKNAAILHYNGNMKPWLELGIPNYKNYWRRHLSREDRFLSDCNVNP.

Residues 1 to 19 (MKGGGGGGGGGGGGKRRWK) lie on the Cytoplasmic side of the membrane. A helical; Signal-anchor for type II membrane protein membrane pass occupies residues 20–40 (VLVIGVLVLVILSMLVPLAFL). Residues 41-619 (LGLHNGFHSP…RFLSDCNVNP (579 aa)) lie on the Lumenal side of the membrane. Residues Asn-68, Asn-106, Asn-132, Asn-343, and Asn-421 are each glycosylated (N-linked (GlcNAc...) asparagine). Positions 95–139 (KSDINVGSRDVNATSGTDSKKRGLPVSPTVVANPSPANKTKSEAS) are disordered. Polar residues predominate over residues 124-139 (VVANPSPANKTKSEAS).

It belongs to the glycosyltransferase 8 family. As to expression, expressed in roots, inflorescences, flowers, siliques, leaves and stems.

The protein resides in the golgi apparatus membrane. The protein operates within glycan metabolism; pectin biosynthesis. Functionally, may be involved in pectin biosynthesis. The protein is Probable galacturonosyltransferase 7 (GAUT7) of Arabidopsis thaliana (Mouse-ear cress).